The following is a 206-amino-acid chain: Alpha-1-acid glycoprotein 3 (206 aa).

A signal peptide spans 1–18; sequence MELHTVLIMLSLLPLLEA. N-linked (GlcNAc...) asparagine glycans are attached at residues Asn-33, Asn-75, and Asn-103. Cysteines 90 and 183 form a disulfide. The segment at 187-206 is disordered; the sequence is EKKHLELEKETKKDPEESQA.

It belongs to the calycin superfamily. Lipocalin family.

It localises to the secreted. Functionally, functions as a transport protein in the blood stream. Binds various ligands in the interior of its beta-barrel domain. Appears to function in modulating the activity of the immune system during the acute-phase reaction. The protein is Alpha-1-acid glycoprotein 3 (Orm3) of Mus musculus (Mouse).